Reading from the N-terminus, the 127-residue chain is Fluoride-specific ion channel FluC (127 aa).

Helical transmembrane passes span 3–23 (ALLLVGAGGAAGAVARYLLGV), 36–56 (GTFAANILGGFLMGLLAGGLA), 72–92 (VGALGGFTTFSAYSLEVALMI), and 101–121 (FAYSLGSVALAVAALFAGLLL). Na(+) contacts are provided by glycine 76 and threonine 79.

Belongs to the fluoride channel Fluc/FEX (TC 1.A.43) family.

It is found in the cell inner membrane. The catalysed reaction is fluoride(in) = fluoride(out). With respect to regulation, na(+) is not transported, but it plays an essential structural role and its presence is essential for fluoride channel function. In terms of biological role, fluoride-specific ion channel. Important for reducing fluoride concentration in the cell, thus reducing its toxicity. The sequence is that of Fluoride-specific ion channel FluC from Phenylobacterium zucineum (strain HLK1).